Consider the following 633-residue polypeptide: Phosphomethylpyrimidine synthase (633 aa).

Substrate contacts are provided by residues Asn-245, Met-274, Tyr-303, His-339, Ser-359–Gly-361, Asp-400–Arg-403, and Glu-439. His-443 lines the Zn(2+) pocket. Tyr-466 serves as a coordination point for substrate. Zn(2+) is bound at residue His-507. Residues Cys-587, Cys-590, and Cys-595 each coordinate [4Fe-4S] cluster.

This sequence belongs to the ThiC family. Homodimer. [4Fe-4S] cluster is required as a cofactor.

The enzyme catalyses 5-amino-1-(5-phospho-beta-D-ribosyl)imidazole + S-adenosyl-L-methionine = 4-amino-2-methyl-5-(phosphooxymethyl)pyrimidine + CO + 5'-deoxyadenosine + formate + L-methionine + 3 H(+). Its pathway is cofactor biosynthesis; thiamine diphosphate biosynthesis. Its function is as follows. Catalyzes the synthesis of the hydroxymethylpyrimidine phosphate (HMP-P) moiety of thiamine from aminoimidazole ribotide (AIR) in a radical S-adenosyl-L-methionine (SAM)-dependent reaction. The sequence is that of Phosphomethylpyrimidine synthase from Neisseria meningitidis serogroup B (strain ATCC BAA-335 / MC58).